The following is a 270-amino-acid chain: Phosphonates import ATP-binding protein PhnC 1 (270 aa).

The ABC transporter domain maps to Leu2–Ala245. Residue Gly34–Ser41 participates in ATP binding.

It belongs to the ABC transporter superfamily. Phosphonates importer (TC 3.A.1.9.1) family. The complex is composed of two ATP-binding proteins (PhnC), two transmembrane proteins (PhnE) and a solute-binding protein (PhnD).

Its subcellular location is the cell inner membrane. The enzyme catalyses phosphonate(out) + ATP + H2O = phosphonate(in) + ADP + phosphate + H(+). In terms of biological role, part of the ABC transporter complex PhnCDE involved in phosphonates import. Responsible for energy coupling to the transport system. In Rhodopseudomonas palustris (strain ATCC BAA-98 / CGA009), this protein is Phosphonates import ATP-binding protein PhnC 1.